The chain runs to 101 residues: Urease subunit beta (101 aa).

This sequence belongs to the urease beta subunit family. In terms of assembly, heterotrimer of UreA (gamma), UreB (beta) and UreC (alpha) subunits. Three heterotrimers associate to form the active enzyme.

The protein resides in the cytoplasm. The enzyme catalyses urea + 2 H2O + H(+) = hydrogencarbonate + 2 NH4(+). Its pathway is nitrogen metabolism; urea degradation; CO(2) and NH(3) from urea (urease route): step 1/1. The protein is Urease subunit beta of Burkholderia mallei (strain NCTC 10247).